A 272-amino-acid chain; its full sequence is Ribosomal RNA small subunit methyltransferase A (272 aa).

Residues asparagine 18, leucine 20, glycine 45, glutamate 66, aspartate 91, and asparagine 113 each contribute to the S-adenosyl-L-methionine site.

The protein belongs to the class I-like SAM-binding methyltransferase superfamily. rRNA adenine N(6)-methyltransferase family. RsmA subfamily.

The protein resides in the cytoplasm. The catalysed reaction is adenosine(1518)/adenosine(1519) in 16S rRNA + 4 S-adenosyl-L-methionine = N(6)-dimethyladenosine(1518)/N(6)-dimethyladenosine(1519) in 16S rRNA + 4 S-adenosyl-L-homocysteine + 4 H(+). In terms of biological role, specifically dimethylates two adjacent adenosines (A1518 and A1519) in the loop of a conserved hairpin near the 3'-end of 16S rRNA in the 30S particle. May play a critical role in biogenesis of 30S subunits. The sequence is that of Ribosomal RNA small subunit methyltransferase A from Yersinia pestis bv. Antiqua (strain Antiqua).